A 262-amino-acid polypeptide reads, in one-letter code: Membrane protein US15 (262 aa).

The next 7 helical transmembrane spans lie at 46 to 66, 77 to 97, 108 to 128, 133 to 153, 163 to 183, 186 to 206, and 226 to 246; these read GAVGWQLAGLTALLSAFCYAA, CLTESSPSLVFVIPVTSVIFI, IGVLLFYTLLHVPPLIVICLC, LVISAALFTLLAFLSCTGVAL, QIVVIHALITLTFTAIVVVIL, GWSWCFKIVLSFSVLITCLAV, and LLAAVKVFLSLVFTLLMVLRI.

The protein belongs to the HHV-5 US12 protein family.

It localises to the host membrane. The protein is Membrane protein US15 (US15) of Human cytomegalovirus (strain Merlin) (HHV-5).